A 478-amino-acid chain; its full sequence is Adenosylhomocysteinase (478 aa).

Residues T67, D144, and E204 each contribute to the substrate site. T205–T207 provides a ligand contact to NAD(+). The substrate site is built by K234 and D238. Residues N239, G268–G273, E291, N326, I347–H349, and N392 contribute to the NAD(+) site.

It belongs to the adenosylhomocysteinase family. The cofactor is NAD(+).

It localises to the cytoplasm. The catalysed reaction is S-adenosyl-L-homocysteine + H2O = L-homocysteine + adenosine. The protein operates within amino-acid biosynthesis; L-homocysteine biosynthesis; L-homocysteine from S-adenosyl-L-homocysteine: step 1/1. In terms of biological role, may play a key role in the regulation of the intracellular concentration of adenosylhomocysteine. This chain is Adenosylhomocysteinase, found in Nitrosomonas eutropha (strain DSM 101675 / C91 / Nm57).